The primary structure comprises 914 residues: Solute carrier family 12 member 9 (914 aa).

Over 1-36 (MASESSPLLAYRLLGEEGAAFPPNGAGVSGVPSSRK) the chain is Cytoplasmic. Phosphoserine is present on Ser-6. Residues 37-57 (LSTFLGVVVPTVLSMFSIVVF) traverse the membrane as a helical segment. Over 58–72 (LRIGFVVGHAGLLQA) the chain is Extracellular. A helical membrane pass occupies residues 73-93 (LAMLLVAYIILALTVLSVCAI). Over 94–119 (ATNGAVRGGGAYFMISRTLGPEVGGS) the chain is Cytoplasmic. Residues 120 to 140 (IGLMFYLANVCGCAVSLLGLV) traverse the membrane as a helical segment. The Extracellular segment spans residues 141-167 (ESILDVFGADATGSSGIQVLPQGYGWN). A helical membrane pass occupies residues 168 to 188 (LLYGSLLLGLVGGVCTLGAGL). Residues 189–193 (YARAS) are Cytoplasmic-facing. The chain crosses the membrane as a helical span at residues 194-214 (FLTFLLVSGSLASVLVSFVAV). Residues 215 to 262 (GPRNIPLAPRPGTNASSVPHRHGHFTGFNGSTLRDNLGAGYAEDYTTG) lie on the Extracellular side of the membrane. N-linked (GlcNAc...) asparagine glycans are attached at residues Asn-228 and Asn-243. Residues 263 to 283 (AMMTFASVFAVLFNGCTGIMA) traverse the membrane as a helical segment. Topologically, residues 284 to 297 (GANMSGELKDPSRA) are cytoplasmic. The helical transmembrane segment at 298-318 (IPLGTIIAVAYTFFIYILLFF) threads the bilayer. Residues 319–338 (LSSFTCDRALLQEDYGFFRD) lie on the Extracellular side of the membrane. A helical transmembrane segment spans residues 339 to 359 (ISLWPPLVLIGIYATALSASM). The Cytoplasmic segment spans residues 360–376 (SSLIGASRILHALAQDD). The helical transmembrane segment at 377-399 (LFGVILAPAKVVSGGGNPWGAVL) threads the bilayer. Residues 400–416 (YSWGLVQLVLLAGKLNT) are Extracellular-facing. The helical transmembrane segment at 417 to 437 (LAAVVTVFYLVAYAAVDLSCL) threads the bilayer. Residues 438–466 (SLEWASAPNFRPTFSLFSWHTCLLGVASC) lie on the Cytoplasmic side of the membrane. The helical transmembrane segment at 467–487 (LLMMFLISPGAAGGSLLLMGL) threads the bilayer. At 488–740 (LSALLTARGG…LLRPRGGPGY (253 aa)) the chain is on the extracellular side. A disordered region spans residues 645–678 (PAFSEPAEGTREGGSPALSTLFPPPRAPGSPRAL). Residues 741-761 (VDVCGLFLLQMATILSMVPAW) form a helical membrane-spanning segment. The Cytoplasmic segment spans residues 762 to 914 (HSARLRIFLC…GVTPVTCTDL (153 aa)). Residues 844–864 (QGRGTVGGPGGPEGRDGEEGP) are disordered.

Belongs to the SLC12A transporter family. In terms of assembly, interacts with SLC12A1.

The protein localises to the cell membrane. It localises to the lysosome membrane. In terms of biological role, may be an inhibitor of SLC12A1. Seems to correspond to a subunit of a multimeric transport system and thus, additional subunits may be required for its function. May play a role in lysosomal ion flux and osmoregulation. The sequence is that of Solute carrier family 12 member 9 (Slc12a9) from Mus musculus (Mouse).